A 477-amino-acid chain; its full sequence is D-alanyl-D-alanine carboxypeptidase DacB (477 aa).

An N-terminal signal peptide occupies residues 1–20; it reads MRFSRFIIGLTSCIAFSVQA. The active-site Acyl-ester intermediate is the Ser62. Residue Lys65 is the Proton acceptor of the active site. The segment at 90–263 is absent in class-A beta-lactamases; it reads GNVENGVLKG…YAGAILKDEL (174 aa). Residue Ser306 is part of the active site. Residue Lys417 coordinates substrate.

Belongs to the peptidase S13 family.

The protein localises to the periplasm. The catalysed reaction is Preferential cleavage: (Ac)2-L-Lys-D-Ala-|-D-Ala. Also transpeptidation of peptidyl-alanyl moieties that are N-acyl substituents of D-alanine.. It functions in the pathway cell wall biogenesis; peptidoglycan biosynthesis. In terms of biological role, not involved in transpeptidation but exclusively catalyzes a DD-carboxypeptidase and DD-endopeptidase reaction. This chain is D-alanyl-D-alanine carboxypeptidase DacB (dacB), found in Escherichia coli (strain K12).